The sequence spans 314 residues: Protoheme IX farnesyltransferase (314 aa).

Transmembrane regions (helical) follow at residues 58–78, 107–127, 130–150, 173–193, 227–247, 248–268, and 294–314; these read LWLVVATVVGGAFSAGSASVF, AALVFGFVLGILSTVILYVWV, LSAALSVAANAFYVLVYTMLL, WTAVTGSLSWVPVVLFAVVFF, VGRQVVIYSWVMVATSLLLWP, VAGTGIFYPIAAGVLGAVFLL, and SSNLYLSLLFVAVALDPLLAG.

This sequence belongs to the UbiA prenyltransferase family. Protoheme IX farnesyltransferase subfamily.

It is found in the cell membrane. The enzyme catalyses heme b + (2E,6E)-farnesyl diphosphate + H2O = Fe(II)-heme o + diphosphate. Its pathway is porphyrin-containing compound metabolism; heme O biosynthesis; heme O from protoheme: step 1/1. Converts heme B (protoheme IX) to heme O by substitution of the vinyl group on carbon 2 of heme B porphyrin ring with a hydroxyethyl farnesyl side group. The chain is Protoheme IX farnesyltransferase from Nocardioides sp. (strain ATCC BAA-499 / JS614).